We begin with the raw amino-acid sequence, 183 residues long: UPF0134 protein MPN_100 (183 aa).

It belongs to the UPF0134 family.

The sequence is that of UPF0134 protein MPN_100 from Mycoplasma pneumoniae (strain ATCC 29342 / M129 / Subtype 1) (Mycoplasmoides pneumoniae).